A 110-amino-acid chain; its full sequence is UPF0060 membrane protein Rpic_4131 (110 aa).

4 consecutive transmembrane segments (helical) span residues V8 to L28, P33 to L53, Y65 to L85, and W88 to Q108.

This sequence belongs to the UPF0060 family.

The protein localises to the cell inner membrane. The polypeptide is UPF0060 membrane protein Rpic_4131 (Ralstonia pickettii (strain 12J)).